Consider the following 20-residue polypeptide: Trypsin inhibitor A chain (20 aa).

This sequence belongs to the protease inhibitor I3 (leguminous Kunitz-type inhibitor) family. As to quaternary structure, heterodimer of an 'A' and a 'B' chain linked by a disulfide bond.

Its function is as follows. Inhibits trypsin and alpha-chymotrypsin. In Albizia julibrissin (Silk tree), this protein is Trypsin inhibitor A chain.